A 570-amino-acid polypeptide reads, in one-letter code: Urease subunit alpha (570 aa).

In terms of domain architecture, Urease spans 131–570; the sequence is GGMDSHIHFI…LPMAQRYFLF (440 aa). Residues His-136, His-138, and Lys-219 each contribute to the Ni(2+) site. Lys-219 carries the post-translational modification N6-carboxylysine. His-221 contacts substrate. Ni(2+)-binding residues include His-248 and His-274. The Proton donor role is filled by His-322. Asp-362 lines the Ni(2+) pocket.

It belongs to the metallo-dependent hydrolases superfamily. Urease alpha subunit family. Heterotrimer of UreA (gamma), UreB (beta) and UreC (alpha) subunits. Three heterotrimers associate to form the active enzyme. Ni cation is required as a cofactor. Post-translationally, carboxylation allows a single lysine to coordinate two nickel ions.

The protein resides in the cytoplasm. It carries out the reaction urea + 2 H2O + H(+) = hydrogencarbonate + 2 NH4(+). The protein operates within nitrogen metabolism; urea degradation; CO(2) and NH(3) from urea (urease route): step 1/1. The sequence is that of Urease subunit alpha from Sinorhizobium fredii (strain NBRC 101917 / NGR234).